Reading from the N-terminus, the 112-residue chain is Iron-sulfur cluster assembly protein CyaY (112 aa).

Belongs to the frataxin family.

Involved in iron-sulfur (Fe-S) cluster assembly. May act as a regulator of Fe-S biogenesis. The protein is Iron-sulfur cluster assembly protein CyaY of Delftia acidovorans (strain DSM 14801 / SPH-1).